We begin with the raw amino-acid sequence, 475 residues long: FAD-dependent monooxygenase spyC (475 aa).

The first 24 residues, 1-24 (MTAKPPFKVIIVGGSIAGLTLAHC), serve as a signal peptide directing secretion. FAD-binding residues include glutamate 36, glycine 50, arginine 109, aspartate 310, and alanine 323. Residues 444–464 (LLIPFLYPVVAFSLCVLAWIG) traverse the membrane as a helical segment.

This sequence belongs to the paxM FAD-dependent monooxygenase family. The cofactor is FAD.

The protein localises to the membrane. It catalyses the reaction (2E,6E,10E)-geranylgeranyl-triacetate lactone + AH2 + O2 = (S)-(2E,6E,10E)-epoxygeranylgeranyl-triacetate lactone + A + H2O. The protein operates within secondary metabolite biosynthesis; terpenoid biosynthesis. Its function is as follows. FAD-dependent monooxygenase spyC; part of the gene cluster that mediates the biosynthesis of meroterpenoids called sartorypyrones. Within the pathway, spyC catalyzes the epoxidation of geranylgeranyl-triacetate lactone at the terminal olein to yield epoxygeranylgeranyl-triacetate lactone. The biosynthesis of sartorypyrones begins with the production of triacetic acid lactone (TAL) by the NR-PKS spyA using one molecule of acetyl-CoA and two molecules of malonyl-CoA. The prenyltransferase spyF then conjugates geranylgeranyl pyrophosphate (GGPP) to TAL to form geranylgeranyl-triacetate lactone, for which the pathway-specific geranylgeranyl pyrophosphate synthase (GGPS) spyE is required to provide GGPP. Subsequently, geranylgeranyl-triacetate lactone is epoxidized at the terminal olein by the FAD-dependent monooxygenase spyC, followed by cyclization of the terpenoid component catalyzed by the terpene cyclase spyD to produce both the bicyclic sartorypyrone F and the monocyclic sartorypyrone D. Finally, the last step of the biosynthesis involves the acetylation of the meroterpenoids sartorypyrones D and F by the acetyltransferase SpyB to produce sartorypyrones A and G, respectively. The sequence is that of FAD-dependent monooxygenase spyC from Aspergillus fumigatus (strain ATCC MYA-4609 / CBS 101355 / FGSC A1100 / Af293) (Neosartorya fumigata).